Consider the following 546-residue polypeptide: Chaperonin GroEL 2 (546 aa).

Residues 30–33 (TLGP), Lys51, 87–91 (DGTTT), Gly415, and Asp496 each bind ATP.

Belongs to the chaperonin (HSP60) family. In terms of assembly, forms a cylinder of 14 subunits composed of two heptameric rings stacked back-to-back. Interacts with the co-chaperonin GroES.

It localises to the cytoplasm. It carries out the reaction ATP + H2O + a folded polypeptide = ADP + phosphate + an unfolded polypeptide.. Functionally, together with its co-chaperonin GroES, plays an essential role in assisting protein folding. The GroEL-GroES system forms a nano-cage that allows encapsulation of the non-native substrate proteins and provides a physical environment optimized to promote and accelerate protein folding. This is Chaperonin GroEL 2 from Bradyrhizobium sp. (strain ORS 278).